The sequence spans 338 residues: Sesquiterpene synthase 1 (338 aa).

Mg(2+)-binding residues include Asp-93, Asn-228, Ser-232, and Glu-236. The DDXXD motif motif lies at 93–97 (DNISD). The short motif at 228-236 (NDIFSYNVE) is the NSE/DTE motif element. (2E,6E)-farnesyl diphosphate-binding residues include Arg-316 and Tyr-317.

It belongs to the terpene synthase family. Mg(2+) serves as cofactor.

The enzyme catalyses (2E,6E)-farnesyl diphosphate = alpha-copaene + diphosphate. It catalyses the reaction (2E,6E)-farnesyl diphosphate = beta-copaene + diphosphate. The catalysed reaction is (2E,6E)-farnesyl diphosphate = alpha-muurolene + diphosphate. It carries out the reaction (2E,6E)-farnesyl diphosphate = gamma-muurolene + diphosphate. The enzyme catalyses (2E,6E)-farnesyl diphosphate = delta-cadinene + diphosphate. Its function is as follows. Terpene cyclase that catalyzes the cyclization of farnesyl diphosphate (FPP) to various sesquiterpenes, including alpha-copaene, beta-copaene, beta-elemene, alpha-muurolene, gamma-muurolene and delta-cadinene. This chain is Sesquiterpene synthase 1, found in Postia placenta (strain ATCC 44394 / Madison 698-R) (Brown rot fungus).